A 304-amino-acid chain; its full sequence is Heme A synthase (304 aa).

Residues 1 to 8 are Cytoplasmic-facing; sequence MFNKRNLK. A helical membrane pass occupies residues 9-29; that stretch reads WLSVLATIIMAFVQLGGALVT. Residues 30–67 are Extracellular-facing; the sequence is KTGSEDGCGSSWPLCHGALLPQNLPIDTIIELSHRAVS. Cysteines 37 and 44 form a disulfide. The active site involves Glu60. Residue His63 participates in heme o binding. A helical membrane pass occupies residues 68–88; the sequence is GLSLIVVLWLAITAWKHIGYI. At 89–93 the chain is on the cytoplasmic side; that stretch reads REVKP. A helical membrane pass occupies residues 94–114; it reads LAIISIAFLLVQALIGAAAVI. At 115–123 the chain is on the extracellular side; sequence WQQNSYVLA. A helical transmembrane segment spans residues 124–144; sequence LHFGISLISFSSVFVLMLIIF. His125 contributes to the heme o binding site. The Cytoplasmic segment spans residues 145–163; sequence EVDKKYEADELYIRKPLRR. A helical transmembrane segment spans residues 164–184; the sequence is LTWIMTGIVYLTIYTGALVRH. The Extracellular portion of the chain corresponds to 185–215; it reads AKASLAYGGWPLPFHDIIPHTEQDWVQFAHR. His214 serves as a coordination point for heme b. A helical transmembrane segment spans residues 216–236; it reads GMAFITFFWIMITFIHAVKNY. Over 237–244 the chain is Cytoplasmic; the sequence is SENRTIRY. A helical membrane pass occupies residues 245–265; sequence GYTTAFILIILQVITGALSVM. At 266 to 270 the chain is on the extracellular side; sequence TNVNL. The helical transmembrane segment at 271-291 threads the bilayer; sequence FIALLHALFITILFGMIAYFI. His276 provides a ligand contact to heme b. Over 292–304 the chain is Cytoplasmic; sequence MLMLRTIRSEKIK.

It belongs to the COX15/CtaA family. Type 1 subfamily. As to quaternary structure, interacts with CtaB. Heme b serves as cofactor.

It is found in the cell membrane. The enzyme catalyses Fe(II)-heme o + 2 A + H2O = Fe(II)-heme a + 2 AH2. It participates in porphyrin-containing compound metabolism; heme A biosynthesis; heme A from heme O: step 1/1. Its function is as follows. Catalyzes the conversion of heme O to heme A by two successive hydroxylations of the methyl group at C8. The first hydroxylation forms heme I, the second hydroxylation results in an unstable dihydroxymethyl group, which spontaneously dehydrates, resulting in the formyl group of heme A. The protein is Heme A synthase of Staphylococcus haemolyticus (strain JCSC1435).